Reading from the N-terminus, the 213-residue chain is 3,4-dihydroxy-2-butanone 4-phosphate synthase (213 aa).

D-ribulose 5-phosphate is bound by residues 37–38 (RE), Asp-42, 150–154 (RAGHT), and Glu-174. Glu-38 contacts Mg(2+). His-153 provides a ligand contact to Mg(2+).

This sequence belongs to the DHBP synthase family. As to quaternary structure, homodimer. Mg(2+) serves as cofactor. Requires Mn(2+) as cofactor.

The enzyme catalyses D-ribulose 5-phosphate = (2S)-2-hydroxy-3-oxobutyl phosphate + formate + H(+). The protein operates within cofactor biosynthesis; riboflavin biosynthesis; 2-hydroxy-3-oxobutyl phosphate from D-ribulose 5-phosphate: step 1/1. Functionally, catalyzes the conversion of D-ribulose 5-phosphate to formate and 3,4-dihydroxy-2-butanone 4-phosphate. This Buchnera aphidicola subsp. Schizaphis graminum (strain Sg) protein is 3,4-dihydroxy-2-butanone 4-phosphate synthase.